We begin with the raw amino-acid sequence, 434 residues long: Monodehydroascorbate reductase 1, peroxisomal (434 aa).

Residues 13–16, E40, R47, K52, I95, and 146–147 contribute to the FAD site; these read GGVS and RE. Residues 171–177, E195, R201, and G260 contribute to the NAD(+) site; that span reads GGYIGLE. 173-177 lines the NADP(+) pocket; that stretch reads YIGLE. NADP(+) is bound by residues R201 and G260. An FAD-binding site is contributed by D297. 313-314 serves as a coordination point for NAD(+); it reads EH. 313–314 serves as a coordination point for NADP(+); the sequence is EH. Position 315 (V315) interacts with FAD. R319 is an L-ascorbate binding site. Residue Y348 participates in FAD binding. NAD(+) is bound at residue Y348. Y348 serves as a coordination point for NADP(+). R350 provides a ligand contact to L-ascorbate. Residue S416 is modified to Phosphoserine.

The protein belongs to the FAD-dependent oxidoreductase family. It depends on FAD as a cofactor.

Its subcellular location is the peroxisome matrix. It carries out the reaction 2 monodehydro-L-ascorbate radical + NADH + H(+) = 2 L-ascorbate + NAD(+). Functionally, catalyzes the conversion of monodehydroascorbate to ascorbate, oxidizing NADH in the process. This chain is Monodehydroascorbate reductase 1, peroxisomal, found in Arabidopsis thaliana (Mouse-ear cress).